We begin with the raw amino-acid sequence, 516 residues long: Methionine--tRNA ligase (516 aa).

The short motif at 13–23 (FYPNGKPHIGH) is the 'HIGH' region element. A 'KMSKS' region motif is present at residues 299 to 303 (KMSKS). ATP is bound at residue Lys-302.

This sequence belongs to the class-I aminoacyl-tRNA synthetase family. MetG type 2B subfamily. In terms of assembly, monomer.

It localises to the cytoplasm. It carries out the reaction tRNA(Met) + L-methionine + ATP = L-methionyl-tRNA(Met) + AMP + diphosphate. Functionally, is required not only for elongation of protein synthesis but also for the initiation of all mRNA translation through initiator tRNA(fMet) aminoacylation. The sequence is that of Methionine--tRNA ligase from Mesorhizobium japonicum (strain LMG 29417 / CECT 9101 / MAFF 303099) (Mesorhizobium loti (strain MAFF 303099)).